A 446-amino-acid polypeptide reads, in one-letter code: MAHVITRINAREILDSRGNPTVEVDLETTLGIFRAAVPSGASTGIYEALELRDNDKSRYLGKGVQQAIKNINEIIAPKLIGLDCREQKKIDNMMVQELDGSKTEWGWSKSKLGANAILAISMAICRAGAAANKTSLYKYLAQLAGKNTEKMILPVPCLNVINGGSHAGNKLSFQEFMIVPVGAPSFKEAMRYGAEVYHTLKSEIKKKYGIDATNVGDEGGFAPNILNAHEALDLLVASIKKAGYENKVKIAMDVAASEFYNIETKTYDLDFKTPNNDKSLVKTGQELVDLYIELVKKYPIISIEDPFDQDDWENYAKLTEAIGKDVQIVGDDLLVTNPTRIEKALEKKACNALLLKVNQIGSITEAIEACLLSQKNNWGVMVSHRSGETEDVFIADLVVALRTGQIKTGAPCRSERNAKYNQLFRIEESLGANGSFAGDKFRLQLN.

Ser42 contributes to the Mg(2+) binding site. Ser42 is subject to Phosphoserine. Positions 104–108 match the Pentapeptide insert motif; that stretch reads EWGWS. Lys133 is subject to N6-acetyllysine. A Glycyl lysine isopeptide (Lys-Gly) (interchain with G-Cter in ubiquitin) cross-link involves residue Lys138. A Phosphotyrosine modification is found at Tyr139. 2 residues coordinate substrate: His166 and Glu175. Glu218 functions as the Proton donor in the catalytic mechanism. A Mg(2+)-binding site is contributed by Asp253. The short motif at 277 to 282 is the DKSLVK motif element; that stretch reads DKSLVK. 2 residues coordinate Mg(2+): Glu304 and Asp331. The substrate site is built by Glu304 and Asp331. Thr339 bears the Phosphothreonine mark. The Proton acceptor role is filled by Lys356. Position 375 is an N6-acetyllysine (Lys375). Substrate is bound by residues 383 to 386 and Lys407; that span reads SHRS.

It belongs to the enolase family. Homodimer. Forms a complex at least composed of DegP, ENO and HSP70. Interacts with G-actin. Interacts (via the DKSLVK motif) with mammalian host PLG/plasminogen (present in the mosquito blood meal); the interaction occurs at the ookinete cell surface and is required for ookinete invasion of the mosquito midgut. Interacts with A.gambiae EBP; depending on the Plasmodium species, the interaction is either involved in ookinete invasion of the mosquito midgut (P.berghei) or is dispensable (P.falciparum). Mg(2+) is required as a cofactor.

The protein localises to the cytoplasm. The protein resides in the nucleus. It localises to the cytoskeleton. It is found in the cell surface. Its subcellular location is the cell membrane. The protein localises to the vacuole. The enzyme catalyses (2R)-2-phosphoglycerate = phosphoenolpyruvate + H2O. It participates in carbohydrate degradation; glycolysis; pyruvate from D-glyceraldehyde 3-phosphate: step 4/5. In terms of biological role, glycolytic enzyme that catalyzes the conversion of 2-phosphoglycerate to phosphoenolpyruvate. In addition to glycolysis, involved in various processes such as parasite development and invasion. Plays an essential role during ookinete invasion of the mosquito vector midgut by mediating the interaction of the ookinete with the midgut epithelium and, further, by binding to mammalian host plasminogen in the blood meal, whose conversion to active plasmin promotes the invasion process. This is Enolase from Plasmodium berghei (strain Anka).